Consider the following 295-residue polypeptide: Beta-chimaerin (295 aa).

The Phorbol-ester/DAG-type zinc finger occupies 41-91; it reads THNFKVHTFRGPHWCEYCANFMWGLIAQGVRCSDCGLNVHKQCSKHVPNDC. The Rho-GAP domain maps to 104 to 295; sequence CDLTTLVKAH…ILIENEDVLF (192 aa).

As to expression, found in cerebellum and testis.

The protein localises to the membrane. Its activity is regulated as follows. In the inactive state, the N terminus protrudes into the active site of the Rho-GAP domain, sterically blocking Rac binding. Phospholipid binding to the Phorbol-ester/DAG-type zinc-finger/C1 domain triggers the cooperative dissociation of these interactions, allowing the N-terminus to move out of the active site and thereby activating the enzyme. In terms of biological role, GTPase-activating protein for p21-rac. The sequence is that of Beta-chimaerin (Chn2) from Rattus norvegicus (Rat).